A 677-amino-acid chain; its full sequence is UvrABC system protein B (677 aa).

The Helicase ATP-binding domain maps to 24-412; the sequence is EGVLQGVPAQ…EGIVVEQVIR (389 aa). 37-44 serves as a coordination point for ATP; sequence GVTGSGKT. The short motif at 90 to 113 is the Beta-hairpin element; it reads YYDYYQPEAYLPNSDTYIEKDLAI. The 163-residue stretch at 429-591 folds into the Helicase C-terminal domain; sequence QIDDLMEEIQ…ITPQQIKKAR (163 aa). In terms of domain architecture, UVR spans 636 to 671; that stretch reads EKSIERTRKLMQEAAKKLEFIEAAQYRNELLKLEDL.

Belongs to the UvrB family. In terms of assembly, forms a heterotetramer with UvrA during the search for lesions. Interacts with UvrC in an incision complex.

It is found in the cytoplasm. Its function is as follows. The UvrABC repair system catalyzes the recognition and processing of DNA lesions. A damage recognition complex composed of 2 UvrA and 2 UvrB subunits scans DNA for abnormalities. Upon binding of the UvrA(2)B(2) complex to a putative damaged site, the DNA wraps around one UvrB monomer. DNA wrap is dependent on ATP binding by UvrB and probably causes local melting of the DNA helix, facilitating insertion of UvrB beta-hairpin between the DNA strands. Then UvrB probes one DNA strand for the presence of a lesion. If a lesion is found the UvrA subunits dissociate and the UvrB-DNA preincision complex is formed. This complex is subsequently bound by UvrC and the second UvrB is released. If no lesion is found, the DNA wraps around the other UvrB subunit that will check the other stand for damage. The sequence is that of UvrABC system protein B from Bacteroides thetaiotaomicron (strain ATCC 29148 / DSM 2079 / JCM 5827 / CCUG 10774 / NCTC 10582 / VPI-5482 / E50).